The following is a 474-amino-acid chain: MSYTKTQAKAGYQAGVKDYRLTYYTPDYTPKDTDVLAAFRVTPQPGVPIEEAGAAVAAESSTGTWTTVWTDGLTELDRYKGRCYDIEPVPGEDNQWICYIAYPLDLFEEGSVTNVLTSLVGNVFGFKALRALRLEDIRFPIALVKTYQGPPHGIVVERDKINKYGRPLLGCTIKPKLGLSAKNYGRAVYECLRGGLDFTKDDENINSQPFMRWRDRFLFVQDAIVKSQAETGEIKGHYLNCTAGTCEEMMERAEFAKELKTPIIMHDYLTGGFTANTTLAKWCRRNGILLHIHRAMHAVIDRQKNHGIHFRVLAKCLRLSGGDHIHTGTVVGKLEGERASTMGFVDLLREEHVERDLSRGIYFTQDWASMPGVMAVASGGIHVWHMPALLDIFGDDAVLQFGGGTLGHPWGNAPGATANRVALEACVKARNEGRDLMREAGDIIREAARWSPELAAACELWKEIKFEYEAVDKL.

2 residues coordinate substrate: Asn-122 and Thr-172. Lys-174 serves as the catalytic Proton acceptor. Lys-176 contacts substrate. Residues Lys-200, Asp-202, and Glu-203 each coordinate Mg(2+). An N6-carboxylysine modification is found at Lys-200. His-293 (proton acceptor) is an active-site residue. Arg-294, His-326, and Ser-378 together coordinate substrate.

The protein belongs to the RuBisCO large chain family. Type I subfamily. In terms of assembly, heterohexadecamer of 8 large chains and 8 small chains; disulfide-linked. The disulfide link is formed within the large subunit homodimers. It depends on Mg(2+) as a cofactor. The disulfide bond which can form in the large chain dimeric partners within the hexadecamer appears to be associated with oxidative stress and protein turnover.

Its subcellular location is the carboxysome. The catalysed reaction is 2 (2R)-3-phosphoglycerate + 2 H(+) = D-ribulose 1,5-bisphosphate + CO2 + H2O. The enzyme catalyses D-ribulose 1,5-bisphosphate + O2 = 2-phosphoglycolate + (2R)-3-phosphoglycerate + 2 H(+). In terms of biological role, ruBisCO catalyzes two reactions: the carboxylation of D-ribulose 1,5-bisphosphate, the primary event in carbon dioxide fixation, as well as the oxidative fragmentation of the pentose substrate in the photorespiration process. Both reactions occur simultaneously and in competition at the same active site. The protein is Ribulose bisphosphate carboxylase large chain of Gloeobacter violaceus (strain ATCC 29082 / PCC 7421).